A 193-amino-acid chain; its full sequence is dTTP/UTP pyrophosphatase (193 aa).

Residue aspartate 70 is the Proton acceptor of the active site.

Belongs to the Maf family. YhdE subfamily. It depends on a divalent metal cation as a cofactor.

It localises to the cytoplasm. It catalyses the reaction dTTP + H2O = dTMP + diphosphate + H(+). The enzyme catalyses UTP + H2O = UMP + diphosphate + H(+). Functionally, nucleoside triphosphate pyrophosphatase that hydrolyzes dTTP and UTP. May have a dual role in cell division arrest and in preventing the incorporation of modified nucleotides into cellular nucleic acids. The polypeptide is dTTP/UTP pyrophosphatase (Ruminiclostridium cellulolyticum (strain ATCC 35319 / DSM 5812 / JCM 6584 / H10) (Clostridium cellulolyticum)).